Consider the following 481-residue polypeptide: Serine/threonine-protein kinase US3 (481 aa).

A disordered region spans residues 12–63 (RPDKRQEASVPPETNTAPAFPASTFYTPAEDAYLAPGPPETIHPSRPPSPGE). A compositionally biased stretch (pro residues) spans 47–61 (PGPPETIHPSRPPSP). Residues 191–478 (FAIHGALIPG…AAELLRLPLF (288 aa)) enclose the Protein kinase domain. ATP is bound by residues 197-205 (LIPGSEGCV) and Lys220. Asp305 functions as the Proton acceptor in the catalytic mechanism.

It belongs to the protein kinase superfamily. Ser/Thr protein kinase family. Interacts with host LAT; this interaction prevents LAT activation of TRAF6. In terms of processing, phosphorylated by UL13; this phosphorylation regulates subsequent phosphorylation of UL31 and UL34 by US3. Autophosphorylated.

It is found in the host cytoplasm. The protein resides in the host nucleus. It carries out the reaction L-seryl-[protein] + ATP = O-phospho-L-seryl-[protein] + ADP + H(+). The catalysed reaction is L-threonyl-[protein] + ATP = O-phospho-L-threonyl-[protein] + ADP + H(+). In terms of biological role, multifunctional serine/threonine kinase that plays a role in several processes including egress of virus particles from the nucleus, modulation of the actin cytoskeleton and inhibition of host immune response. Phosphorylates UL31 and UL34, two critical regulators of capsid budding from nucleus to endoplasmic reticulum, thereby facilitating virion egress. Modulates and redistributes host components of the nuclear envelope, including LMNA, emerin/EMD and the nuclear matrix protein MATR3. In turn, facilitates nuclear pore impairment and capsid release through impaired nuclear envelope. Phosphorylates envelope glycoprotein B (gB), probably to direct it to the cell surface. Promotes virus intracellular spread by restructuring host cell cytoskeleton. Blocks host apoptosis to extend cell survival and allow efficient viral replication. Promotes viral gene expression by phosphorylating host HDAC2 to reduce viral genome silencing. Strongly inhibits TCR-activated signal transduction in T-cells by reducing the ubiquitination of LAT and TRAF6, leading to a suboptimal activation of LAT. Subverts host antiviral innate immunity by inhibiting type I interferon production through hyperphosphorylation of beta-catenin/CTNNB1. In addition, phosphorylates the RNA sensor RIGI and the transcription factor IRF3 to prevent the RLR-mediated antiviral signaling pathway. Hyperphosphorylates host RELA and thereby dampens NF-kappa-B signaling. Acts as an immunoevasin partly responsible for inhibition of MR1 expression and antigen presentation in response to bacterial infection. This Human herpesvirus 2 (strain HG52) (HHV-2) protein is Serine/threonine-protein kinase US3 (US3).